Consider the following 452-residue polypeptide: tRNA modification GTPase MnmE (452 aa).

R23, E80, and K119 together coordinate (6S)-5-formyl-5,6,7,8-tetrahydrofolate. The region spanning 215 to 374 is the TrmE-type G domain; it reads GIWIALVGQP…LQQGLLEMIG (160 aa). N225 is a K(+) binding site. Residues 225-230, 244-250, and 269-272 each bind GTP; these read NVGKSS, TEVPGTT, and DTAG. Residue S229 participates in Mg(2+) binding. T244, V246, and T249 together coordinate K(+). T250 is a Mg(2+) binding site. A (6S)-5-formyl-5,6,7,8-tetrahydrofolate-binding site is contributed by K452.

It belongs to the TRAFAC class TrmE-Era-EngA-EngB-Septin-like GTPase superfamily. TrmE GTPase family. In terms of assembly, homodimer. Heterotetramer of two MnmE and two MnmG subunits. K(+) serves as cofactor.

It localises to the cytoplasm. Functionally, exhibits a very high intrinsic GTPase hydrolysis rate. Involved in the addition of a carboxymethylaminomethyl (cmnm) group at the wobble position (U34) of certain tRNAs, forming tRNA-cmnm(5)s(2)U34. This Nitrosospira multiformis (strain ATCC 25196 / NCIMB 11849 / C 71) protein is tRNA modification GTPase MnmE.